Consider the following 469-residue polypeptide: 3-isopropylmalate dehydratase large subunit (469 aa).

The [4Fe-4S] cluster site is built by Cys-350, Cys-410, and Cys-413.

This sequence belongs to the aconitase/IPM isomerase family. LeuC type 1 subfamily. Heterodimer of LeuC and LeuD. [4Fe-4S] cluster serves as cofactor.

It catalyses the reaction (2R,3S)-3-isopropylmalate = (2S)-2-isopropylmalate. Its pathway is amino-acid biosynthesis; L-leucine biosynthesis; L-leucine from 3-methyl-2-oxobutanoate: step 2/4. Functionally, catalyzes the isomerization between 2-isopropylmalate and 3-isopropylmalate, via the formation of 2-isopropylmaleate. The sequence is that of 3-isopropylmalate dehydratase large subunit from Sinorhizobium fredii (strain NBRC 101917 / NGR234).